The primary structure comprises 72 residues: DNA-directed RNA polymerase subunit omega (72 aa).

It belongs to the RNA polymerase subunit omega family. The RNAP catalytic core consists of 2 alpha, 1 beta, 1 beta' and 1 omega subunit. When a sigma factor is associated with the core the holoenzyme is formed, which can initiate transcription.

It catalyses the reaction RNA(n) + a ribonucleoside 5'-triphosphate = RNA(n+1) + diphosphate. In terms of biological role, promotes RNA polymerase assembly. Latches the N- and C-terminal regions of the beta' subunit thereby facilitating its interaction with the beta and alpha subunits. In Francisella tularensis subsp. holarctica (strain LVS), this protein is DNA-directed RNA polymerase subunit omega.